The sequence spans 529 residues: Peptide chain release factor 3 (529 aa).

The region spanning 11 to 280 is the tr-type G domain; it reads AKRRTFAIIS…GLVKWAPAPM (270 aa). Residues 20-27, 88-92, and 142-145 contribute to the GTP site; these read SHPDAGKT, DTPGH, and NKLD.

This sequence belongs to the TRAFAC class translation factor GTPase superfamily. Classic translation factor GTPase family. PrfC subfamily.

The protein localises to the cytoplasm. Increases the formation of ribosomal termination complexes and stimulates activities of RF-1 and RF-2. It binds guanine nucleotides and has strong preference for UGA stop codons. It may interact directly with the ribosome. The stimulation of RF-1 and RF-2 is significantly reduced by GTP and GDP, but not by GMP. The polypeptide is Peptide chain release factor 3 (Photorhabdus laumondii subsp. laumondii (strain DSM 15139 / CIP 105565 / TT01) (Photorhabdus luminescens subsp. laumondii)).